The chain runs to 769 residues: Scarecrow-like protein 14 (769 aa).

Disordered stretches follow at residues 1 to 23, 128 to 157, 279 to 320, and 364 to 388; these read MGSY…DFDL, PSSS…GAFS, TEKK…ERSN, and TAQS…DSKK. In terms of domain architecture, GRAS spans 384–765; it reads NDSKKETADL…RIVYASSLWV (382 aa). Residues 391–451 form a leucine repeat I (LRI) region; that stretch reads ADLRTLLVLC…EARLAGTGTQ (61 aa). The segment at 470-536 is VHIID; sequence YQTYMSVCPF…GGSPKLRITG (67 aa). A VHIID motif is present at residues 501–505; it reads IHIID. Residues 552 to 584 form a leucine repeat II (LRII) region; the sequence is ETGHRLARYCQRHNVPFEYNAIAQKWETIQVED. Residues 593–687 form a PFYRE region; the sequence is VVVNSLFRFR…KEFYGREIVN (95 aa). The segment at 690-765 is SAW; that stretch reads ACEGTERVER…RIVYASSLWV (76 aa).

This sequence belongs to the GRAS family. In terms of tissue distribution, expressed in roots, shoots, flowers and siliques.

Its subcellular location is the nucleus. Functionally, probable transcription factor involved in plant development. This chain is Scarecrow-like protein 14 (SCL14), found in Arabidopsis thaliana (Mouse-ear cress).